The following is a 564-amino-acid chain: Sulfite reductase [NADPH] hemoprotein beta-component 1 (564 aa).

[4Fe-4S] cluster contacts are provided by Cys426, Cys432, Cys471, and Cys475. Cys475 is a binding site for siroheme.

The protein belongs to the nitrite and sulfite reductase 4Fe-4S domain family. In terms of assembly, alpha(8)-beta(8). The alpha component is a flavoprotein, the beta component is a hemoprotein. The cofactor is siroheme. Requires [4Fe-4S] cluster as cofactor.

The enzyme catalyses hydrogen sulfide + 3 NADP(+) + 3 H2O = sulfite + 3 NADPH + 4 H(+). Its pathway is sulfur metabolism; hydrogen sulfide biosynthesis; hydrogen sulfide from sulfite (NADPH route): step 1/1. Its function is as follows. Component of the sulfite reductase complex that catalyzes the 6-electron reduction of sulfite to sulfide. This is one of several activities required for the biosynthesis of L-cysteine from sulfate. The sequence is that of Sulfite reductase [NADPH] hemoprotein beta-component 1 from Pectobacterium carotovorum subsp. carotovorum (strain PC1).